A 163-amino-acid polypeptide reads, in one-letter code: Neurotrophin-3 (163 aa).

Residues 1–3 form the signal peptide; it reads IQS. Residues 4 to 119 constitute a propeptide that is removed on maturation; the sequence is TSMDQGILTE…VLNRTSRRKR (116 aa). N-linked (GlcNAc...) asparagine glycosylation occurs at asparagine 112.

The protein belongs to the NGF-beta family.

The protein localises to the secreted. Its function is as follows. Seems to promote the survival of visceral and proprioceptive sensory neurons. In Epicrates cenchria (Rainbow boa), this protein is Neurotrophin-3 (NTF3).